A 236-amino-acid polypeptide reads, in one-letter code: GCN5-related N-acetyltransferase 8 (236 aa).

An N-acetyltransferase domain is found at 96–235 (ATITSSPSPD…DALEAFDQVN (140 aa)). Residues 161–163 (IFV), 169–174 (RKGFGS), 200–202 (NVN), and Tyr207 contribute to the acetyl-CoA site. The active-site Proton donor is the Tyr207.

Belongs to the acetyltransferase family. GNAT subfamily. In terms of assembly, oligomer. In terms of tissue distribution, expressed throughout the plant.

The protein resides in the cytoplasm. It localises to the nucleus. The enzyme catalyses an N-terminal L-alpha-aminoacyl-[protein] + acetyl-CoA = N-terminal N(alpha)-acetyl-L-alpha-aminoacyl-[protein] + CoA + H(+). It carries out the reaction L-lysyl-[protein] + acetyl-CoA = N(6)-acetyl-L-lysyl-[protein] + CoA + H(+). Probable protein acetyltransferase with dual specificity triggering both N-alpha-acetylation (NTA) and epsilon-lysine acetylation (KA). The polypeptide is GCN5-related N-acetyltransferase 8 (Arabidopsis thaliana (Mouse-ear cress)).